The following is a 95-amino-acid chain: Large ribosomal subunit protein uL23 (95 aa).

This sequence belongs to the universal ribosomal protein uL23 family. As to quaternary structure, part of the 50S ribosomal subunit. Contacts protein L29, and trigger factor when it is bound to the ribosome.

Functionally, one of the early assembly proteins it binds 23S rRNA. One of the proteins that surrounds the polypeptide exit tunnel on the outside of the ribosome. Forms the main docking site for trigger factor binding to the ribosome. The protein is Large ribosomal subunit protein uL23 of Thermodesulfovibrio yellowstonii (strain ATCC 51303 / DSM 11347 / YP87).